The primary structure comprises 169 residues: Endoribonuclease YbeY (169 aa).

The segment at 72–95 (GPVAAPRQEPDSPPACRKDSSHAE) is disordered. The Zn(2+) site is built by His-131, His-135, and His-141.

The protein belongs to the endoribonuclease YbeY family. Zn(2+) serves as cofactor.

It is found in the cytoplasm. Single strand-specific metallo-endoribonuclease involved in late-stage 70S ribosome quality control and in maturation of the 3' terminus of the 16S rRNA. In Oleidesulfovibrio alaskensis (strain ATCC BAA-1058 / DSM 17464 / G20) (Desulfovibrio alaskensis), this protein is Endoribonuclease YbeY.